The chain runs to 316 residues: Beta-ketoacyl-[acyl-carrier-protein] synthase III (316 aa).

Residues C112 and H243 contribute to the active site. An ACP-binding region spans residues 244–248; that stretch reads QANIR. N273 is an active-site residue.

This sequence belongs to the thiolase-like superfamily. FabH family. In terms of assembly, homodimer.

The protein resides in the cytoplasm. The enzyme catalyses malonyl-[ACP] + acetyl-CoA + H(+) = 3-oxobutanoyl-[ACP] + CO2 + CoA. It functions in the pathway lipid metabolism; fatty acid biosynthesis. In terms of biological role, catalyzes the condensation reaction of fatty acid synthesis by the addition to an acyl acceptor of two carbons from malonyl-ACP. Catalyzes the first condensation reaction which initiates fatty acid synthesis and may therefore play a role in governing the total rate of fatty acid production. Possesses both acetoacetyl-ACP synthase and acetyl transacylase activities. Its substrate specificity determines the biosynthesis of branched-chain and/or straight-chain of fatty acids. The chain is Beta-ketoacyl-[acyl-carrier-protein] synthase III from Actinobacillus pleuropneumoniae serotype 5b (strain L20).